A 412-amino-acid chain; its full sequence is Glucose-1-phosphate adenylyltransferase (412 aa).

Residues Tyr98, Gly163, 178-179 (EK), and Ser189 contribute to the alpha-D-glucose 1-phosphate site.

The protein belongs to the bacterial/plant glucose-1-phosphate adenylyltransferase family. In terms of assembly, homotetramer.

It carries out the reaction alpha-D-glucose 1-phosphate + ATP + H(+) = ADP-alpha-D-glucose + diphosphate. The protein operates within glycan biosynthesis; glycogen biosynthesis. Its function is as follows. Involved in the biosynthesis of ADP-glucose, a building block required for the elongation reactions to produce glycogen. Catalyzes the reaction between ATP and alpha-D-glucose 1-phosphate (G1P) to produce pyrophosphate and ADP-Glc. In Thermosipho melanesiensis (strain DSM 12029 / CIP 104789 / BI429), this protein is Glucose-1-phosphate adenylyltransferase.